The sequence spans 68 residues: MIFPIRCFSCGNVISEVYEEYRTRLKNGENPEEILNDLEIKKYCCRRMFASHRLDNDRELFDDIVEYK.

The Zn(2+) site is built by C7, C10, C44, and C45.

It belongs to the archaeal Rpo10/eukaryotic RPB10 RNA polymerase subunit family. As to quaternary structure, part of the RNA polymerase complex. It depends on Zn(2+) as a cofactor.

Its subcellular location is the cytoplasm. It catalyses the reaction RNA(n) + a ribonucleoside 5'-triphosphate = RNA(n+1) + diphosphate. DNA-dependent RNA polymerase (RNAP) catalyzes the transcription of DNA into RNA using the four ribonucleoside triphosphates as substrates. The polypeptide is DNA-directed RNA polymerase subunit Rpo10 (Methanococcus maripaludis (strain DSM 14266 / JCM 13030 / NBRC 101832 / S2 / LL)).